A 173-amino-acid polypeptide reads, in one-letter code: dCTP deaminase, dUMP-forming (173 aa).

DCTP contacts are provided by residues 93-98 (RSSIGR), D111, 119-121 (TLE), and Q138. The active-site Proton donor/acceptor is E121.

This sequence belongs to the dCTP deaminase family. As to quaternary structure, homotrimer.

The enzyme catalyses dCTP + 2 H2O = dUMP + NH4(+) + diphosphate. It functions in the pathway pyrimidine metabolism; dUMP biosynthesis; dUMP from dCTP: step 1/1. Functionally, bifunctional enzyme that catalyzes both the deamination of dCTP to dUTP and the hydrolysis of dUTP to dUMP without releasing the toxic dUTP intermediate. The sequence is that of dCTP deaminase, dUMP-forming from Leptospira borgpetersenii serovar Hardjo-bovis (strain JB197).